A 542-amino-acid polypeptide reads, in one-letter code: CTP synthase (542 aa).

Positions 1-265 (MTRYIFVTGG…DDFVVERFGL (265 aa)) are amidoligase domain. Ser13 contributes to the CTP binding site. UTP is bound at residue Ser13. ATP is bound by residues 14-19 (SLGKGI) and Asp71. Asp71 and Glu139 together coordinate Mg(2+). CTP is bound by residues 146–148 (DIE), 186–191 (KTKPTQ), and Lys222. UTP-binding positions include 186–191 (KTKPTQ) and Lys222. In terms of domain architecture, Glutamine amidotransferase type-1 spans 290-541 (TIAMVGKYME…VKAALAQKNK (252 aa)). Gly351 serves as a coordination point for L-glutamine. Cys378 (nucleophile; for glutamine hydrolysis) is an active-site residue. Residues 379–382 (LGMQ), Glu402, and Arg469 each bind L-glutamine. Active-site residues include His514 and Glu516.

It belongs to the CTP synthase family. As to quaternary structure, homotetramer.

It catalyses the reaction UTP + L-glutamine + ATP + H2O = CTP + L-glutamate + ADP + phosphate + 2 H(+). The catalysed reaction is L-glutamine + H2O = L-glutamate + NH4(+). The enzyme catalyses UTP + NH4(+) + ATP = CTP + ADP + phosphate + 2 H(+). The protein operates within pyrimidine metabolism; CTP biosynthesis via de novo pathway; CTP from UDP: step 2/2. Its activity is regulated as follows. Allosterically activated by GTP, when glutamine is the substrate; GTP has no effect on the reaction when ammonia is the substrate. The allosteric effector GTP functions by stabilizing the protein conformation that binds the tetrahedral intermediate(s) formed during glutamine hydrolysis. Inhibited by the product CTP, via allosteric rather than competitive inhibition. Catalyzes the ATP-dependent amination of UTP to CTP with either L-glutamine or ammonia as the source of nitrogen. Regulates intracellular CTP levels through interactions with the four ribonucleotide triphosphates. This Pseudomonas putida (strain ATCC 700007 / DSM 6899 / JCM 31910 / BCRC 17059 / LMG 24140 / F1) protein is CTP synthase.